The primary structure comprises 213 residues: Deoxyribose-phosphate aldolase (213 aa).

Asp-89 (proton donor/acceptor) is an active-site residue. Lys-151 (schiff-base intermediate with acetaldehyde) is an active-site residue. Lys-180 acts as the Proton donor/acceptor in catalysis.

It belongs to the DeoC/FbaB aldolase family. DeoC type 1 subfamily.

It localises to the cytoplasm. It carries out the reaction 2-deoxy-D-ribose 5-phosphate = D-glyceraldehyde 3-phosphate + acetaldehyde. Its pathway is carbohydrate degradation; 2-deoxy-D-ribose 1-phosphate degradation; D-glyceraldehyde 3-phosphate and acetaldehyde from 2-deoxy-alpha-D-ribose 1-phosphate: step 2/2. Catalyzes a reversible aldol reaction between acetaldehyde and D-glyceraldehyde 3-phosphate to generate 2-deoxy-D-ribose 5-phosphate. The sequence is that of Deoxyribose-phosphate aldolase from Finegoldia magna (strain ATCC 29328 / DSM 20472 / WAL 2508) (Peptostreptococcus magnus).